A 351-amino-acid chain; its full sequence is Fruit bromelain (351 aa).

The N-terminal stretch at 1–24 is a signal peptide; the sequence is MASKVQLVFLFLFLCAMWASPSAA. The propeptide at 25 to 121 is activation peptide; it reads SRDEPNDPMM…VVSFDDVNIS (97 aa). A glycan (N-linked (GlcNAc...) asparagine) is linked at asparagine 119. 3 cysteine pairs are disulfide-bonded: cysteine 144–cysteine 184, cysteine 178–cysteine 217, and cysteine 273–cysteine 325. Residue cysteine 147 is part of the active site. Catalysis depends on residues histidine 279 and asparagine 300.

This sequence belongs to the peptidase C1 family.

It carries out the reaction Hydrolysis of proteins with broad specificity for peptide bonds. Bz-Phe-Val-Arg-|-NHMec is a good synthetic substrate, but there is no action on Z-Arg-Arg-|-NHMec (cf. stem bromelain).. Functionally, cysteine proteinase with a high level of diversity in substrate specificity. In Ananas comosus (Pineapple), this protein is Fruit bromelain.